Consider the following 404-residue polypeptide: Putative transporter AmpG 2 (404 aa).

12 consecutive transmembrane segments (helical) span residues 11 to 31 (IYNILFILFISLPGGLIYLLT), 49 to 69 (IGLFSLVNFIHIFKFLWGPLL), 84 to 104 (YCLIFSLLSCICCVYILTGFN), 109 to 129 (FISFSLCLIILAFFSSIYDML), 154 to 174 (FRIGILISGSGALYLSTIISW), 177 to 197 (VYRTMAILCVPSLLLIIFYPL), 224 to 244 (WLIIVGFMLLYRLQDNFLAVM), 261 to 281 (LGYKAFGMCATIAGGFIGGFL), 294 to 311 (VLVYHALSSITFLLLYSY), 315 to 337 (ITTLYIAVFLQEFTKGLTMSPFF), 353 to 373 (IALITSIAYISTVLFGSISGY), and 378 to 398 (LGWGYFFAIASFCFIPAYILI).

Belongs to the major facilitator superfamily.

The protein localises to the cell inner membrane. The protein is Putative transporter AmpG 2 (ampG2) of Rickettsia bellii (strain RML369-C).